A 190-amino-acid chain; its full sequence is Elongation factor P (190 aa).

Residue Lys-34 is modified to N6-(3,6-diaminohexanoyl)-5-hydroxylysine.

The protein belongs to the elongation factor P family. May be beta-lysylated on the epsilon-amino group of Lys-34 by the combined action of EpmA and EpmB, and then hydroxylated on the C5 position of the same residue by EpmC (if this protein is present). Lysylation is critical for the stimulatory effect of EF-P on peptide-bond formation. The lysylation moiety may extend toward the peptidyltransferase center and stabilize the terminal 3-CCA end of the tRNA. Hydroxylation of the C5 position on Lys-34 may allow additional potential stabilizing hydrogen-bond interactions with the P-tRNA.

It is found in the cytoplasm. Its pathway is protein biosynthesis; polypeptide chain elongation. In terms of biological role, involved in peptide bond synthesis. Alleviates ribosome stalling that occurs when 3 or more consecutive Pro residues or the sequence PPG is present in a protein, possibly by augmenting the peptidyl transferase activity of the ribosome. Modification of Lys-34 is required for alleviation. The sequence is that of Elongation factor P from Psychrobacter cryohalolentis (strain ATCC BAA-1226 / DSM 17306 / VKM B-2378 / K5).